Consider the following 137-residue polypeptide: Large ribosomal subunit protein uL16c (137 aa).

Belongs to the universal ribosomal protein uL16 family. As to quaternary structure, part of the 50S ribosomal subunit.

It localises to the plastid. Its subcellular location is the chloroplast. The protein is Large ribosomal subunit protein uL16c of Bigelowiella natans (Pedinomonas minutissima).